The chain runs to 223 residues: ATP phosphoribosyltransferase (223 aa).

The protein belongs to the ATP phosphoribosyltransferase family. Short subfamily. In terms of assembly, heteromultimer composed of HisG and HisZ subunits.

The protein resides in the cytoplasm. It carries out the reaction 1-(5-phospho-beta-D-ribosyl)-ATP + diphosphate = 5-phospho-alpha-D-ribose 1-diphosphate + ATP. It participates in amino-acid biosynthesis; L-histidine biosynthesis; L-histidine from 5-phospho-alpha-D-ribose 1-diphosphate: step 1/9. In terms of biological role, catalyzes the condensation of ATP and 5-phosphoribose 1-diphosphate to form N'-(5'-phosphoribosyl)-ATP (PR-ATP). Has a crucial role in the pathway because the rate of histidine biosynthesis seems to be controlled primarily by regulation of HisG enzymatic activity. This Desulfitobacterium hafniense (strain Y51) protein is ATP phosphoribosyltransferase.